The chain runs to 1482 residues: Cystic fibrosis transmembrane conductance regulator (1482 aa).

Topologically, residues 1–77 (MQRSPLEKAS…KLINALQRCF (77 aa)) are cytoplasmic. Residues 78–98 (FWRFTFYGILLYLGEVTKAIQ) traverse the membrane as a helical segment. One can recognise an ABC transmembrane type-1 1 domain in the interval 81–365 (FTFYGILLYL…WAVQTWYDSL (285 aa)). Residues 99–122 (PLLLGRIIASYDPDNKMERSIAIY) are Extracellular-facing. A helical transmembrane segment spans residues 123–146 (LGIGLCLLFIMRTLLLHPAIFGLH). At 147–195 (HIGMQMRIALFSLIYKKTLKLSSRVLDKISIGQLVSLLSNNLNKFDEGL) the chain is on the cytoplasmic side. The helical transmembrane segment at 196 to 216 (ALAHFVWIAPLQVMLLMGLLW) threads the bilayer. Residues 217–222 (ELLQAS) lie on the Extracellular side of the membrane. Residues 223-243 (AFCGLAFLIVLALLQAGLGRM) traverse the membrane as a helical segment. Topologically, residues 244–298 (MMKYRDQRAGKINERLVITSEMIENIQSVKAYCWEEAMEKMIENLRQTELRLTRK) are cytoplasmic. The helical transmembrane segment at 299–319 (AAYVRYVNSSAFFFSGFFVVF) threads the bilayer. The Extracellular segment spans residues 320 to 339 (LSVLPYALIKGIILRKIFTT). A helical membrane pass occupies residues 340–358 (ISFCIVLRMAVTRQFPWAV). Over 359–859 (QTWYDSLGAI…YLRYITVHKN (501 aa)) the chain is Cytoplasmic. ATP-binding positions include Trp401, 458-465 (GSTGAGKT), and Gln493. Positions 423–646 (SGDNRLFFSN…RPDFSSKLMG (224 aa)) constitute an ABC transporter 1 domain. Cys524 carries S-palmitoyl cysteine lipidation. Ser549 and Ser660 each carry phosphoserine. The segment at 654–832 (SAERRNSILT…EEINEEDLKE (179 aa)) is disordered R region. Phosphoserine; by PKA is present on Ser670. Ser686 bears the Phosphoserine mark. A Glycyl lysine isopeptide (Lys-Gly) (interchain with G-Cter in ubiquitin) cross-link involves residue Lys688. Residues Ser700 and Ser712 each carry the phosphoserine modification. Thr717 is subject to Phosphothreonine. Ser737, Ser768, Ser791, Ser796, and Ser814 each carry phosphoserine. The helical transmembrane segment at 860–880 (LIFVLIWCLVIFLAEVAASLV) threads the bilayer. One can recognise an ABC transmembrane type-1 2 domain in the interval 860–1156 (LIFVLIWCLV…AVNSSIDVDS (297 aa)). The Extracellular segment spans residues 881–919 (AFWLIEKTRPQDKGNSTRSTNNTSPVIITSTSAFYMFYI). N-linked (GlcNAc...) asparagine glycans are attached at residues Asn895 and Asn901. A discontinuously helical membrane pass occupies residues 920 to 940 (YVGVADSLLALGFLRGLPLVH). The Cytoplasmic portion of the chain corresponds to 941–991 (TLITVSKILHQKMLHSVLHAPMSTLNTLKAGAILNRFSKDIAILDDLLPLT). A helical transmembrane segment spans residues 992–1012 (IFDFIQLVLIVIGAVVVVSIL). The Extracellular segment spans residues 1013–1014 (KP). The chain crosses the membrane as a helical span at residues 1015–1035 (YIFLAAVPVIIAFVILRAYFL). The Cytoplasmic portion of the chain corresponds to 1036–1096 (QTSQQLKQLE…TATWFLYLST (61 aa)). Residues 1097 to 1117 (LRWFQMRIEMIFVVFFVAVTF) traverse the membrane as a helical segment. At 1118-1131 (ISILTTGEGEGTVG) the chain is on the extracellular side. Residues 1132–1152 (IILTLAMNIMSTLQWAVNSSI) traverse the membrane as a helical segment. Residues 1153–1482 (DVDSLMRSVS…AEEEVQDTRL (330 aa)) are Cytoplasmic-facing. The ABC transporter 2 domain occupies 1212–1445 (ITVKDLTAKY…KSLFQQAISP (234 aa)). ATP-binding positions include Tyr1221 and 1246-1253 (GRTGSGKS). The tract at residues 1388-1482 (RALKQAFADC…AEEEVQDTRL (95 aa)) is interaction with GORASP2. Cys1397 is lipidated: S-palmitoyl cysteine. Phosphoserine is present on residues Ser1446 and Ser1458. The tract at residues 1454 to 1482 (QRSSSKHRSRAQITALKEEAEEEVQDTRL) is disordered. Acidic residues predominate over residues 1472–1482 (EAEEEVQDTRL). The PDZ-binding signature appears at 1480 to 1482 (TRL).

This sequence belongs to the ABC transporter superfamily. ABCC family. CFTR transporter (TC 3.A.1.202) subfamily. As to quaternary structure, monomer; does not require oligomerization for channel activity. May form oligomers in the membrane. Interacts with SLC26A3, SLC26A6 and NHERF1. Interacts with SHANK2. Interacts with MYO6. Interacts (via C-terminus) with GOPC (via PDZ domain); this promotes CFTR internalization and thereby decreases channel activity. Interacts with SLC4A7 through NHERF1. Found in a complex with MYO5B and RAB11A. Interacts with ANO1. Interacts with SLC26A8. Interacts with AHCYL1; the interaction increases CFTR activity. Interacts with CSE1L. The core-glycosylated form interacts with GORASP2 (via PDZ GRASP-type 1 domain) in respone to ER stress. Interacts with MARCHF2; the interaction leads to CFTR ubiqtuitination and degradation. Interacts with ADGRG2. Post-translationally, N-glycosylated. Phosphorylated; cAMP treatment promotes phosphorylation and activates the channel. Dephosphorylation decreases the ATPase activity (in vitro). Phosphorylation at PKA sites activates the channel. Phosphorylation at PKC sites enhances the response to phosphorylation by PKA. Phosphorylated by AMPK; this inhibits channel activity. In terms of processing, ubiquitinated, leading to its degradation in the lysosome. Deubiquitination by USP10 in early endosomes enhances its endocytic recycling to the cell membrane. Ubiquitinated by RNF185 during ER stress. Ubiquitinated by MARCHF2.

The protein resides in the apical cell membrane. It localises to the early endosome membrane. The protein localises to the cell membrane. It is found in the recycling endosome membrane. Its subcellular location is the endoplasmic reticulum membrane. The protein resides in the nucleus. It carries out the reaction ATP + H2O + closed Cl(-) channel = ADP + phosphate + open Cl(-) channel.. It catalyses the reaction chloride(in) = chloride(out). The enzyme catalyses hydrogencarbonate(in) = hydrogencarbonate(out). The catalysed reaction is ATP + H2O = ADP + phosphate + H(+). Functionally, epithelial ion channel that plays an important role in the regulation of epithelial ion and water transport and fluid homeostasis. Mediates the transport of chloride ions across the cell membrane. Possesses an intrinsic ATPase activity and utilizes ATP to gate its channel; the passive flow of anions through the channel is gated by cycles of ATP binding and hydrolysis by the ATP-binding domains. The ion channel is also permeable to HCO(3)(-); selectivity depends on the extracellular chloride concentration. Exerts its function also by modulating the activity of other ion channels and transporters. Contributes to the regulation of the pH and the ion content of the epithelial fluid layer. Modulates the activity of the epithelial sodium channel (ENaC) complex, in part by regulating the cell surface expression of the ENaC complex. May regulate bicarbonate secretion and salvage in epithelial cells by regulating the transporter SLC4A7. Can inhibit the chloride channel activity of ANO1. Plays a role in the chloride and bicarbonate homeostasis during sperm epididymal maturation and capacitation. The sequence is that of Cystic fibrosis transmembrane conductance regulator from Rhinolophus ferrumequinum (Greater horseshoe bat).